Consider the following 395-residue polypeptide: tRNA-specific 2-thiouridylase MnmA (395 aa).

ATP-binding positions include 7–14 (GLSGGVDS) and Met-33. An interaction with target base in tRNA region spans residues 95-97 (NPD). Residue Cys-100 is the Nucleophile of the active site. Cys-100 and Cys-200 are oxidised to a cystine. Gly-124 is a binding site for ATP. Residues 150–152 (KDQ) form an interaction with tRNA region. The Cysteine persulfide intermediate role is filled by Cys-200. Residues 346 to 347 (RY) form an interaction with tRNA region.

It belongs to the MnmA/TRMU family.

It is found in the cytoplasm. The enzyme catalyses S-sulfanyl-L-cysteinyl-[protein] + uridine(34) in tRNA + AH2 + ATP = 2-thiouridine(34) in tRNA + L-cysteinyl-[protein] + A + AMP + diphosphate + H(+). Catalyzes the 2-thiolation of uridine at the wobble position (U34) of tRNA, leading to the formation of s(2)U34. This chain is tRNA-specific 2-thiouridylase MnmA, found in Flavobacterium johnsoniae (strain ATCC 17061 / DSM 2064 / JCM 8514 / BCRC 14874 / CCUG 350202 / NBRC 14942 / NCIMB 11054 / UW101) (Cytophaga johnsonae).